We begin with the raw amino-acid sequence, 226 residues long: MKDLVDTTEMYLRTIYELEEEGVTPLRARIAERLEQSGPTVSQTVARMERDGLVVVASDRSLQMTPTGRTLATAVMRKHRLAERLLTDIIGLDINKVHDEACRWEHVMSDEVERRLVKVLKDVSRSPFGNPIPGLDELGVGNSDAAVPGTRVIDAATSMPRKVRIVQINEIFQVETDQFTQLLDADIRVGSEVEIVDRDGHITLSHNGKDVELIDDLAHTIRIEEL.

Residues 4 to 65 (LVDTTEMYLR…VASDRSLQMT (62 aa)) form the HTH dtxR-type domain.

Belongs to the DtxR/MntR family. In terms of assembly, homodimer.

It localises to the cytoplasm. Iron-binding repressor of the dipheteria toxin gene expression. May serve as a global regulator of gene expression. Represses ripA under iron excess. This chain is Diphtheria toxin repressor (dtxR), found in Corynebacterium diphtheriae (strain ATCC 700971 / NCTC 13129 / Biotype gravis).